Here is a 127-residue protein sequence, read N- to C-terminus: Large ribosomal subunit protein bL17 (127 aa).

The protein belongs to the bacterial ribosomal protein bL17 family. Part of the 50S ribosomal subunit. Contacts protein L32.

The chain is Large ribosomal subunit protein bL17 from Pediococcus pentosaceus (strain ATCC 25745 / CCUG 21536 / LMG 10740 / 183-1w).